A 533-amino-acid chain; its full sequence is Apolipoprotein N-acyltransferase (533 aa).

Helical transmembrane passes span 17-37, 74-94, 105-125, 127-147, 178-198, and 205-225; these read ALLA…FGFF, WLFG…ALLI, LAIL…AVLA, LLWS…GLLE, VIGV…PALL, and VPGI…GYYA. In terms of domain architecture, CN hydrolase spans 245–495; sequence VQPAIDQEAK…QGFVDSTLSG (251 aa). E290 serves as the catalytic Proton acceptor. Residue K354 is part of the active site. C407 acts as the Nucleophile in catalysis. The chain crosses the membrane as a helical span at residues 509–529; sequence YFWLIIGIVGMIAVISRMGFI.

The protein belongs to the CN hydrolase family. Apolipoprotein N-acyltransferase subfamily.

The protein localises to the cell inner membrane. The catalysed reaction is N-terminal S-1,2-diacyl-sn-glyceryl-L-cysteinyl-[lipoprotein] + a glycerophospholipid = N-acyl-S-1,2-diacyl-sn-glyceryl-L-cysteinyl-[lipoprotein] + a 2-acyl-sn-glycero-3-phospholipid + H(+). Its pathway is protein modification; lipoprotein biosynthesis (N-acyl transfer). Catalyzes the phospholipid dependent N-acylation of the N-terminal cysteine of apolipoprotein, the last step in lipoprotein maturation. The chain is Apolipoprotein N-acyltransferase from Rhizobium rhizogenes (strain K84 / ATCC BAA-868) (Agrobacterium radiobacter).